Reading from the N-terminus, the 61-residue chain is Large ribosomal subunit protein uL30 (61 aa).

It belongs to the universal ribosomal protein uL30 family. As to quaternary structure, part of the 50S ribosomal subunit.

The polypeptide is Large ribosomal subunit protein uL30 (Thermobifida fusca (strain YX)).